The chain runs to 525 residues: GMP synthase [glutamine-hydrolyzing] (525 aa).

The Glutamine amidotransferase type-1 domain occupies 8-207 (KILILDFGSQ…ALEICGCPAN (200 aa)). Cys-85 acts as the Nucleophile in catalysis. Active-site residues include His-181 and Glu-183. The GMPS ATP-PPase domain maps to 208–400 (WKPSSIIEDA…LGLPYDMLYR (193 aa)). An ATP-binding site is contributed by 235 to 241 (SGGVDSS).

Homodimer.

The catalysed reaction is XMP + L-glutamine + ATP + H2O = GMP + L-glutamate + AMP + diphosphate + 2 H(+). It participates in purine metabolism; GMP biosynthesis; GMP from XMP (L-Gln route): step 1/1. Catalyzes the synthesis of GMP from XMP. This Shewanella pealeana (strain ATCC 700345 / ANG-SQ1) protein is GMP synthase [glutamine-hydrolyzing].